The primary structure comprises 172 residues: Protein-export protein SecB (172 aa).

The segment at 1–22 (MADETSADINNPALQPNGEDTS) is disordered. Positions 7 to 20 (ADINNPALQPNGED) are enriched in polar residues.

It belongs to the SecB family. Homotetramer, a dimer of dimers. One homotetramer interacts with 1 SecA dimer.

It is found in the cytoplasm. Functionally, one of the proteins required for the normal export of preproteins out of the cell cytoplasm. It is a molecular chaperone that binds to a subset of precursor proteins, maintaining them in a translocation-competent state. It also specifically binds to its receptor SecA. This is Protein-export protein SecB from Sphingopyxis alaskensis (strain DSM 13593 / LMG 18877 / RB2256) (Sphingomonas alaskensis).